Consider the following 328-residue polypeptide: MQTNLLKPKAINVDPLGGHRAKVTLEPFERGFGHTLGNALRRVLLSSMVGYAPTEVTIAGVLHEYSTVDGVQEDVVHIMLNLKGVVFRLHNRDEVTLVLRKEGEGPVKASDIQTPHDVEIINPDHVIAHLAQGGKLDMQIKVEKGRGYVPGSMRRYADEPTKSIGRIVLDASFSPLKRVSYTVESARVEQRTDLDKLVMEIETNGAISPEEAIRASAKILVEQLAVFAQLEGSDLAIFEAPAPRAQHFDPILLRPVDELELTVRSANCLKAENIYYIGDLIQRTETELLKTPNLGRKSLNEIKEVLASRGLTLGARLENWPPQGLDKR.

Residues 1 to 231 (MQTNLLKPKA…EQLAVFAQLE (231 aa)) form an alpha N-terminal domain (alpha-NTD) region. The interval 248-328 (FDPILLRPVD…NWPPQGLDKR (81 aa)) is alpha C-terminal domain (alpha-CTD).

It belongs to the RNA polymerase alpha chain family. Homodimer. The RNAP catalytic core consists of 2 alpha, 1 beta, 1 beta' and 1 omega subunit. When a sigma factor is associated with the core the holoenzyme is formed, which can initiate transcription.

It carries out the reaction RNA(n) + a ribonucleoside 5'-triphosphate = RNA(n+1) + diphosphate. In terms of biological role, DNA-dependent RNA polymerase catalyzes the transcription of DNA into RNA using the four ribonucleoside triphosphates as substrates. In Leptothrix cholodnii (strain ATCC 51168 / LMG 8142 / SP-6) (Leptothrix discophora (strain SP-6)), this protein is DNA-directed RNA polymerase subunit alpha.